A 247-amino-acid chain; its full sequence is Ribonuclease PH (247 aa).

Residues Arg-90 and Gly-128 to Arg-130 contribute to the phosphate site.

It belongs to the RNase PH family. Homohexameric ring arranged as a trimer of dimers.

It catalyses the reaction tRNA(n+1) + phosphate = tRNA(n) + a ribonucleoside 5'-diphosphate. Functionally, phosphorolytic 3'-5' exoribonuclease that plays an important role in tRNA 3'-end maturation. Removes nucleotide residues following the 3'-CCA terminus of tRNAs; can also add nucleotides to the ends of RNA molecules by using nucleoside diphosphates as substrates, but this may not be physiologically important. Probably plays a role in initiation of 16S rRNA degradation (leading to ribosome degradation) during starvation. The chain is Ribonuclease PH from Synechococcus sp. (strain CC9605).